A 725-amino-acid polypeptide reads, in one-letter code: ABC transporter G family member 7 (725 aa).

A helical transmembrane segment spans residues 12–34; it reads VVSGIGGNGVGGALAAVAAALLV. An ABC transporter domain is found at 70–316; sequence IRWRNITCSL…YFGNFGFLCP (247 aa). An ATP-binding site is contributed by 108–115; sequence GPSGSGKT. The ABC transmembrane type-2 domain maps to 392-603; sequence RQFFLLLKRA…AFQGLCINEF (212 aa). Transmembrane regions (helical) follow at residues 446 to 466, 493 to 513, 528 to 548, and 553 to 573; these read LLQVAAINTAMAALTKTVGVF, IAEIPIGAAFPLMFGAVLYPM, GIVTVESFAASAMGLTVGAMV, and AAMAVGPSLMTVFIVFGGYYV. The tract at residues 676-725 is disordered; it reads NSGVQLDKAEVDQTEKPEDDDINQPLDDQNQTSDSDDELDEIRPFVLEGL. Residues 682–691 are compositionally biased toward basic and acidic residues; the sequence is DKAEVDQTEK.

This sequence belongs to the ABC transporter superfamily. ABCG family. Eye pigment precursor importer (TC 3.A.1.204) subfamily.

Its subcellular location is the membrane. This is ABC transporter G family member 7 (ABCG7) from Arabidopsis thaliana (Mouse-ear cress).